The chain runs to 390 residues: Digeranylgeranylglycerophospholipid reductase (390 aa).

Residues alanine 18, glutamate 37, cysteine 48, alanine 49, alanine 51, arginine 98, valine 122, aspartate 278, glycine 290, and isoleucine 291 each contribute to the FAD site. Residue valine 368 participates in a 2,3-bis-O-(geranylgeranyl)-sn-glycerol 1-phospholipid binding.

It belongs to the geranylgeranyl reductase family. DGGGPL reductase subfamily. The cofactor is FAD.

The enzyme catalyses a 2,3-bis-O-phytanyl-sn-glycerol 1-phospholipid + 8 A = a 2,3-bis-O-(geranylgeranyl)-sn-glycerol 1-phospholipid + 8 AH2. It catalyses the reaction 2,3-bis-O-(phytanyl)-sn-glycerol 1-phosphate + 8 A = 2,3-bis-O-(geranylgeranyl)-sn-glycerol 1-phosphate + 8 AH2. The catalysed reaction is CDP-2,3-bis-O-(geranylgeranyl)-sn-glycerol + 8 AH2 = CDP-2,3-bis-O-(phytanyl)-sn-glycerol + 8 A. It carries out the reaction archaetidylserine + 8 AH2 = 2,3-bis-O-phytanyl-sn-glycero-3-phospho-L-serine + 8 A. Its pathway is membrane lipid metabolism; glycerophospholipid metabolism. In terms of biological role, is involved in the reduction of 2,3-digeranylgeranylglycerophospholipids (unsaturated archaeols) into 2,3-diphytanylglycerophospholipids (saturated archaeols) in the biosynthesis of archaeal membrane lipids. Catalyzes the formation of archaetidic acid (2,3-di-O-phytanyl-sn-glyceryl phosphate) from 2,3-di-O-geranylgeranylglyceryl phosphate (DGGGP) via the hydrogenation of each double bond of the isoprenoid chains. Is also probably able to reduce double bonds of geranyl groups in CDP-2,3-bis-O-(geranylgeranyl)-sn-glycerol and archaetidylserine, thus acting at various stages in the biosynthesis of archaeal membrane lipids. In Methanococcus vannielii (strain ATCC 35089 / DSM 1224 / JCM 13029 / OCM 148 / SB), this protein is Digeranylgeranylglycerophospholipid reductase.